The primary structure comprises 246 residues: Peroxisomal membrane protein 11A (246 aa).

The Cytoplasmic portion of the chain corresponds to 1-93 (MDAFIRVANQ…LCLTLANLNR (93 aa)). A helical membrane pass occupies residues 94-114 (VVYYICDTVLWAKSVGLTSGV). At 115 to 217 (NREKWQRWAA…LNQLGIYKSN (103 aa)) the chain is on the lumenal side. A helical membrane pass occupies residues 218–238 (LGVVGLGGLISSLAGLLTVVY). Positions 218–238 (LGVVGLGGLISSLAGLLTVVY) are required for homodimerization, interaction with PEX11G, and peroxisomal localization. At 239–246 (PQLKLKAR) the chain is on the cytoplasmic side.

Belongs to the peroxin-11 family. In terms of assembly, homodimer. Heterodimer with PEX11G. Probably interacts with COPB2 and COPA. Interacts with PEX19. Interacts with FIS1. Strongly expressed in liver and at lower levels in heart, brain, kidney and testis.

The protein localises to the peroxisome membrane. Functionally, may be involved in peroxisomal proliferation and may regulate peroxisomes division. May mediate binding of coatomer proteins to the peroxisomal membrane. Promotes membrane protrusion and elongation on the peroxisomal surface. The protein is Peroxisomal membrane protein 11A (Pex11a) of Mus musculus (Mouse).